We begin with the raw amino-acid sequence, 43 residues long: Protein PsbN (43 aa).

A helical membrane pass occupies residues 7–29 (VTIFLSGLLVSFTGYALYTAFGQ).

The protein belongs to the PsbN family.

Its subcellular location is the plastid. The protein localises to the chloroplast thylakoid membrane. In terms of biological role, may play a role in photosystem I and II biogenesis. This is Protein PsbN from Ipomoea purpurea (Common morning glory).